The sequence spans 251 residues: 5'-nucleotidase SurE (251 aa).

Residues D8, D9, S42, and N94 each coordinate a divalent metal cation.

The protein belongs to the SurE nucleotidase family. A divalent metal cation is required as a cofactor.

It localises to the cytoplasm. The enzyme catalyses a ribonucleoside 5'-phosphate + H2O = a ribonucleoside + phosphate. In terms of biological role, nucleotidase that shows phosphatase activity on nucleoside 5'-monophosphates. The sequence is that of 5'-nucleotidase SurE from Hydrogenovibrio crunogenus (strain DSM 25203 / XCL-2) (Thiomicrospira crunogena).